The chain runs to 401 residues: Probable thioesterase FGSG_00047 (401 aa).

Residues 379–401 (AREMDQRKRQKDFTHTTIHDKNS) form a disordered region.

It belongs to the AMT4 thioesterase family.

Its pathway is mycotoxin biosynthesis. Its function is as follows. Probable thioesterase; part of the gene cluster that mediates the biosynthesis of gramillins A and B, bicyclic lipopeptides that induce cell death in maize leaves but not in wheat leaves. The nonribosomal peptide synthetase GRA1 incorporates respectively a glutamic adic (Glu), a leucine (Leu), a serine (Ser), a hydroxyglutamine (HOGln), a 2-amino decanoic acid, and 2 cysteins (CysB and CysA). The biosynthesis of 2-amino decanoic acid incorporated in gramillins could be initiated by a fatty acid synthase composed of the alpha and beta subunits FGSG_00036 and FGSG_11656. The cytochrome P450 monooxygenase FGSG_15680 could hydroxylate the fatty acid chain. Subsequent oxidation to the ketone by the oxidoreductase FGSG_00048 and transamination by aminotransferase FGSG_00049 could form 2-amino-decanoic acid. On the other hand, FGSG_15680 could also be responsible for the HO-modified glutamine at the gamma-position. Whether hydroxylation occurs on the fully assembled product or on the Gln residue prior to assembly into the gramillins requires further proof. The thioredoxin FGSG_00043 could also be required for the disulfide-bond formation between CysA and CysB. The specific involvement of the remaining proteins from the cluster is more difficult to discern, but could have broader regulatory (FGSG_00040 and FGSG_11657) or enzymatic functions (FGSG_00044 and FGSG_00045). The final C-domain of GRA1 does not possess the expected sequence of a termination CT domain, often implicated in macrocyclization and release of a cyclopeptidein fungal NRPs; and the thioesterase FGSG_00047 may act in concert with the terminal C-domain of GRA1 to catalyze the formation of the macrocyclic anhydride and release of the products. The polypeptide is Probable thioesterase FGSG_00047 (Gibberella zeae (strain ATCC MYA-4620 / CBS 123657 / FGSC 9075 / NRRL 31084 / PH-1) (Wheat head blight fungus)).